We begin with the raw amino-acid sequence, 306 residues long: Putative S-adenosyl-L-methionine-dependent methyltransferase FRAAL5401 (306 aa).

Residues aspartate 126 and 155 to 156 contribute to the S-adenosyl-L-methionine site; that span reads DL. Residues 201-225 are disordered; that stretch reads LSAPESRVATENRPNPKPGDEDRTK.

The protein belongs to the UPF0677 family.

Exhibits S-adenosyl-L-methionine-dependent methyltransferase activity. This chain is Putative S-adenosyl-L-methionine-dependent methyltransferase FRAAL5401, found in Frankia alni (strain DSM 45986 / CECT 9034 / ACN14a).